The chain runs to 355 residues: Small ribosomal subunit protein uS2 (355 aa).

The protein belongs to the universal ribosomal protein uS2 family.

The polypeptide is Small ribosomal subunit protein uS2 (Methylorubrum extorquens (strain CM4 / NCIMB 13688) (Methylobacterium extorquens)).